The sequence spans 363 residues: MKRSLNENSARSTAGCLPVPLFNQKKRNRQPLTSNPLKDDSGISTPSDNYDFPPLPTDWAWEAVNPELAPVMKTVDTGQIPHSVSRPLRSQDSVFNSIQSNTGRSQGGWSYRDGNKNTSLKTWNKNDFKPQCKRTNLVANDGKNSCPVSSGAQQQKQLRIPEPPNLSRNKETELLRQTHSSKISGCTMRGLDKNSALQTLKPNFQQNQYKKQMLDDIPEDNTLKETSLYQLQFKEKASSLRIISAVIESMKYWREHAQKTVLLFEVLAVLDSAVTPGPYYSKTFLMRDGKNTLPCVFYEIDRELPRLIRGRVHRCVGNYDQKKNIFQCVSVRPASVSEQKTFQAFVKIADVEMQYYINVMNET.

Composition is skewed to polar residues over residues 1–12 (MKRSLNENSARS), 30–48 (QPLT…TPSD), 98–108 (IQSNTGRSQGG), and 140–157 (NDGK…QQKQ). Disordered regions lie at residues 1 to 51 (MKRS…DNYD), 98 to 127 (IQSN…NKND), and 140 to 170 (NDGK…SRNK).

As to quaternary structure, component of a multiprotein complex with MEIOB and RPA2. Interacts with MEIOB. Interacts with the complex BRME1:HSF2BP:BRCA2. In terms of tissue distribution, highly expressed in adult testis.

Its subcellular location is the chromosome. Its function is as follows. Meiosis-specific protein required for homologous recombination in meiosis I. The sequence is that of Spermatogenesis-associated protein 22 from Homo sapiens (Human).